Here is a 130-residue protein sequence, read N- to C-terminus: MSMQDPIADMFTRIRNGQMAQKVSVTMPSSKLRVAICEVLKAEGYITDFAASGDVKPVLEVTLKYFEGKQVIDTIERVSRPGLRIYKKKDELPKVMGGLGVAIVSTSKGVMTDRAARNAGMGGEIIGYVA.

This sequence belongs to the universal ribosomal protein uS8 family. As to quaternary structure, part of the 30S ribosomal subunit. Contacts proteins S5 and S12.

In terms of biological role, one of the primary rRNA binding proteins, it binds directly to 16S rRNA central domain where it helps coordinate assembly of the platform of the 30S subunit. This chain is Small ribosomal subunit protein uS8, found in Alteromonas mediterranea (strain DSM 17117 / CIP 110805 / LMG 28347 / Deep ecotype).